A 220-amino-acid polypeptide reads, in one-letter code: Ribosomal RNA small subunit methyltransferase G (220 aa).

S-adenosyl-L-methionine contacts are provided by glycine 78, leucine 83, and arginine 144.

The protein belongs to the methyltransferase superfamily. RNA methyltransferase RsmG family.

The protein resides in the cytoplasm. It carries out the reaction guanosine(527) in 16S rRNA + S-adenosyl-L-methionine = N(7)-methylguanosine(527) in 16S rRNA + S-adenosyl-L-homocysteine. In terms of biological role, specifically methylates the N7 position of guanine in position 527 of 16S rRNA. The polypeptide is Ribosomal RNA small subunit methyltransferase G (Alkalilimnicola ehrlichii (strain ATCC BAA-1101 / DSM 17681 / MLHE-1)).